The primary structure comprises 494 residues: Protein DETOXIFICATION 22 (494 aa).

Transmembrane regions (helical) follow at residues 40 to 60 (LWVVAAPSIFTKFSTYGVSLV), 78 to 98 (ITFTVLLRFSNGILLGMASAL), 123 to 143 (IVLTGCTICIMPIFIFSGPIL), 159 to 179 (IALWLIAINFTFVPAFTCQIF), 188 to 208 (IIAYVSAVTLGLHVFFSWLLV), 217 to 237 (GAMTSTLVAFWMPNIVQLLYV), 268 to 288 (GGMVCLELWYNSILVLLTGNL), 299 to 319 (AICINVNALQMMIALGFLAAV), 340 to 360 (IVAVFTSLSIGLVLFFVFLFL), 384 to 404 (LLAFSILLNSVQPVLSGVAVG), 416 to 436 (LACYYLLGIPVGLVLGYVVGL), and 441 to 461 (VWIGMLFGIFVQTCVLTIMTL).

This sequence belongs to the multi antimicrobial extrusion (MATE) (TC 2.A.66.1) family.

The protein localises to the membrane. The chain is Protein DETOXIFICATION 22 from Arabidopsis thaliana (Mouse-ear cress).